The sequence spans 277 residues: Large ribosomal subunit protein uL2 (277 aa).

The tract at residues 199-277 is disordered; the sequence is DHMNTSVGKA…ILISRHKRKK (79 aa). Residues 209–220 are compositionally biased toward basic residues; that stretch reads GRTRWMGRRPHN.

This sequence belongs to the universal ribosomal protein uL2 family. As to quaternary structure, part of the 50S ribosomal subunit. Forms a bridge to the 30S subunit in the 70S ribosome.

Its function is as follows. One of the primary rRNA binding proteins. Required for association of the 30S and 50S subunits to form the 70S ribosome, for tRNA binding and peptide bond formation. It has been suggested to have peptidyltransferase activity; this is somewhat controversial. Makes several contacts with the 16S rRNA in the 70S ribosome. The chain is Large ribosomal subunit protein uL2 from Nitrobacter winogradskyi (strain ATCC 25391 / DSM 10237 / CIP 104748 / NCIMB 11846 / Nb-255).